Reading from the N-terminus, the 526-residue chain is Secreted triacylglycerol lipase LIP4 (526 aa).

Positions 1 to 26 (MVRLSYVRFGVAWCIAIIIVSGFSNA) are cleaved as a signal peptide. N-linked (GlcNAc...) asparagine glycosylation is present at Asn-186. Residue Ser-195 is the Nucleophile of the active site. N-linked (GlcNAc...) asparagine glycosylation occurs at Asn-228. Active-site residues include Asp-342 and His-376. The N-linked (GlcNAc...) asparagine glycan is linked to Asn-377. The disordered stretch occupies residues 412-526 (TGPSASSSAG…TMPAPPLMER (115 aa)). 2 stretches are compositionally biased toward low complexity: residues 413–423 (GPSASSSAGGP) and 430–457 (TGGH…HAPA). N-linked (GlcNAc...) asparagine glycosylation is present at Asn-462. Residues 480 to 490 (PSTGATSPAPS) show a composition bias toward low complexity. Over residues 516–526 (RTMPAPPLMER) the composition is skewed to pro residues.

Belongs to the AB hydrolase superfamily. Lipase family. Class Lip subfamily.

It localises to the secreted. It catalyses the reaction a triacylglycerol + H2O = a diacylglycerol + a fatty acid + H(+). It carries out the reaction a monoacylglycerol + H2O = glycerol + a fatty acid + H(+). The catalysed reaction is a diacylglycerol + H2O = a monoacylglycerol + a fatty acid + H(+). In terms of biological role, secreted lipase that hydrolyzes acylglycerol lipids such as triacylglycerols and consequently releases free fatty acid. Can hydrolyze 4-nitrophenyl palmitate to release 4-nitrophenol and palmitoic acid. Due to an absence of fatty acid synthase genes in Malassezia species, secretory lipases are essential for the yeast to generate free fatty acids from degradation of sebum and assimilate them as lipid sources for growth. Plays important roles not only in lipid metabolism but also in the immune response of host cells and pathogenesis. This chain is Secreted triacylglycerol lipase LIP4, found in Malassezia furfur (Pityriasis versicolor infection agent).